Consider the following 354-residue polypeptide: Uroporphyrinogen decarboxylase (354 aa).

Substrate-binding positions include 30–34, D79, Y154, S209, and H333; that span reads RQAGR.

The protein belongs to the uroporphyrinogen decarboxylase family. Homodimer.

It is found in the cytoplasm. The enzyme catalyses uroporphyrinogen III + 4 H(+) = coproporphyrinogen III + 4 CO2. Its pathway is porphyrin-containing compound metabolism; protoporphyrin-IX biosynthesis; coproporphyrinogen-III from 5-aminolevulinate: step 4/4. Functionally, catalyzes the decarboxylation of four acetate groups of uroporphyrinogen-III to yield coproporphyrinogen-III. The protein is Uroporphyrinogen decarboxylase of Mycolicibacterium vanbaalenii (strain DSM 7251 / JCM 13017 / BCRC 16820 / KCTC 9966 / NRRL B-24157 / PYR-1) (Mycobacterium vanbaalenii).